Here is a 500-residue protein sequence, read N- to C-terminus: Maturase K (500 aa).

The protein belongs to the intron maturase 2 family. MatK subfamily.

Its subcellular location is the plastid. The protein resides in the chloroplast. Usually encoded in the trnK tRNA gene intron. Probably assists in splicing its own and other chloroplast group II introns. The polypeptide is Maturase K (Prunus laurocerasus (Cherry laurel)).